Reading from the N-terminus, the 512-residue chain is MGIQAAEISAILKDQIKNFGQEAEVAEVGRVLSVGDGIARVYGLDNVQAGEMVEFPGGIQGMALNLESDNVGVVIFGSDRDIKEGDTVKRTNSIVSVPTGDELLGRVVDGLGNPIDGKGPIKTKTTSVADVKAPGIIPRKSVHEPMATGLKAVDSMIPIGRGQRELIIGDRQTGKTAVALDAILNQKSYNDAAGDDESKKLYCVYVAIGQKRSTVAQLVKKLEETGAINYSIVVAATASEPAPMQFLAPYSATAMAEHFRDNGRHALIVYDDLSKQAVSYRQMSLLLRRPPGREAYPGDVFYLHSRLLERSAKLGDDAGNGSLTALPIIETQGGDVSAFIPTNVISITDGQIFLETELFYQGIRPAVNTGLSVSRVGSSAQTSAMSSVAGPVKLSLAQYREMAAFAQFGSDLDASTQQLLARGARLTELMKQPQYSPLTNAEIVCVIFAGTNGFLDKVDVKDVGRFEEALLNHMRSKHSDVLDWITNEDPKIKGDAADKLKAAISEFASDFA.

169–176 (GDRQTGKT) is a binding site for ATP.

The protein belongs to the ATPase alpha/beta chains family. As to quaternary structure, F-type ATPases have 2 components, CF(1) - the catalytic core - and CF(0) - the membrane proton channel. CF(1) has five subunits: alpha(3), beta(3), gamma(1), delta(1), epsilon(1). CF(0) has four main subunits: a(1), b(1), b'(1) and c(9-12).

The protein resides in the cell inner membrane. The enzyme catalyses ATP + H2O + 4 H(+)(in) = ADP + phosphate + 5 H(+)(out). In terms of biological role, produces ATP from ADP in the presence of a proton gradient across the membrane. The alpha chain is a regulatory subunit. This chain is ATP synthase subunit alpha, found in Roseobacter denitrificans (strain ATCC 33942 / OCh 114) (Erythrobacter sp. (strain OCh 114)).